Consider the following 184-residue polypeptide: ATP synthase subunit b, chloroplastic (184 aa).

Residues 27 to 49 form a helical membrane-spanning segment; sequence FATNPINLSVVLGVLIFFGKGVL.

This sequence belongs to the ATPase B chain family. As to quaternary structure, F-type ATPases have 2 components, F(1) - the catalytic core - and F(0) - the membrane proton channel. F(1) has five subunits: alpha(3), beta(3), gamma(1), delta(1), epsilon(1). F(0) has four main subunits: a(1), b(1), b'(1) and c(10-14). The alpha and beta chains form an alternating ring which encloses part of the gamma chain. F(1) is attached to F(0) by a central stalk formed by the gamma and epsilon chains, while a peripheral stalk is formed by the delta, b and b' chains.

It localises to the plastid. The protein resides in the chloroplast thylakoid membrane. Functionally, f(1)F(0) ATP synthase produces ATP from ADP in the presence of a proton or sodium gradient. F-type ATPases consist of two structural domains, F(1) containing the extramembraneous catalytic core and F(0) containing the membrane proton channel, linked together by a central stalk and a peripheral stalk. During catalysis, ATP synthesis in the catalytic domain of F(1) is coupled via a rotary mechanism of the central stalk subunits to proton translocation. Component of the F(0) channel, it forms part of the peripheral stalk, linking F(1) to F(0). The chain is ATP synthase subunit b, chloroplastic from Amborella trichopoda.